The sequence spans 203 residues: ATP-dependent Clp protease proteolytic subunit (203 aa).

Serine 98 acts as the Nucleophile in catalysis. Histidine 123 is a catalytic residue.

The protein belongs to the peptidase S14 family. Fourteen ClpP subunits assemble into 2 heptameric rings which stack back to back to give a disk-like structure with a central cavity, resembling the structure of eukaryotic proteasomes.

The protein resides in the cytoplasm. The enzyme catalyses Hydrolysis of proteins to small peptides in the presence of ATP and magnesium. alpha-casein is the usual test substrate. In the absence of ATP, only oligopeptides shorter than five residues are hydrolyzed (such as succinyl-Leu-Tyr-|-NHMec, and Leu-Tyr-Leu-|-Tyr-Trp, in which cleavage of the -Tyr-|-Leu- and -Tyr-|-Trp bonds also occurs).. Its function is as follows. Cleaves peptides in various proteins in a process that requires ATP hydrolysis. Has a chymotrypsin-like activity. Plays a major role in the degradation of misfolded proteins. The polypeptide is ATP-dependent Clp protease proteolytic subunit (Desulfotalea psychrophila (strain LSv54 / DSM 12343)).